A 132-amino-acid polypeptide reads, in one-letter code: uncharacterized protein (132 aa).

This is an uncharacterized protein from Sinorhizobium fredii (strain NBRC 101917 / NGR234).